Reading from the N-terminus, the 429-residue chain is Large ribosomal subunit protein mL37 (429 aa).

The transit peptide at 1-29 (MALRPVVLRRAPAHSRGILTRPGPPRPRG) directs the protein to the mitochondrion. Residues 12–45 (PAHSRGILTRPGPPRPRGPLPRTPWTTRGPPPDQ) are disordered. Residues 22-33 (PGPPRPRGPLPR) are compositionally biased toward pro residues.

This sequence belongs to the mitochondrion-specific ribosomal protein mL37 family. As to quaternary structure, component of the mitochondrial ribosome large subunit (39S) which comprises a 16S rRNA and about 50 distinct proteins.

The protein resides in the mitochondrion. This is Large ribosomal subunit protein mL37 (MRPL37) from Gallus gallus (Chicken).